The sequence spans 149 residues: Large ribosomal subunit protein uL15 (149 aa).

2 stretches are compositionally biased toward basic residues: residues 1 to 14 and 21 to 30; these read MPTH…HRGH and RVGKHRKHPG. Residues 1–42 are disordered; that stretch reads MPTHLSKTRKHRGHVSAGHGRVGKHRKHPGGRGLAGGQHHHR.

Belongs to the universal ribosomal protein uL15 family.

The protein is Large ribosomal subunit protein uL15 of Blumeria hordei (Barley powdery mildew).